The sequence spans 726 residues: Bromodomain-containing protein 3 (726 aa).

Residues 1 to 35 (MSTATTVAPAGIPATPGPVNPPPPEVSNPSKPGRK) are disordered. The residue at position 2 (serine 2) is an N-acetylserine. Over residues 15–26 (TPGPVNPPPPEV) the composition is skewed to pro residues. Residues 34–140 (RKTNQLQYMQ…KIFLQKVAQM (107 aa)) enclose the Bromo 1 domain. Residues 78–80 (KNP) are acetylated histone H3 binding. Disordered stretches follow at residues 149–169 (PPAP…AGTQ) and 237–305 (VKKK…AGKK). Residues 248–261 (TTTPTTSAITASRS) show a composition bias toward low complexity. Phosphoserine occurs at positions 263 and 281. The 110-residue stretch at 306–415 (GKLSEHLRYC…DVFEMRFAKM (110 aa)) folds into the Bromo 2 domain. Residue lysine 414 forms a Glycyl lysine isopeptide (Lys-Gly) (interchain with G-Cter in SUMO2) linkage. Disordered regions lie at residues 421 to 462 (EAPA…RATR), 477 to 575 (LAAL…MSYD), and 637 to 726 (LQKK…SDSE). Residues 453-524 (SDSEEERATR…AEEEKKAKVA (72 aa)) are a coiled coil. Residues 487 to 503 (KPKKKKEKKEKEKKKKD) are compositionally biased toward basic residues. The segment covering 504–521 (KEKEKEKHKVKAEEEKKA) has biased composition (basic and acidic residues). The segment covering 523–540 (VAPPAKQAQQKKAPAKKA) has biased composition (low complexity). Positions 562–644 (DSEEEEEGLP…SCLQKKQRKP (83 aa)) constitute an NET domain. Position 563 is a phosphoserine (serine 563). Residues 645-684 (FSASGKKQAAKSKEELAQEKKKELEKRLQDVSGQLSSSKK) adopt a coiled-coil conformation. Over residues 655–673 (KSKEELAQEKKKELEKRLQ) the composition is skewed to basic and acidic residues. The span at 692-726 (GSAPSGGPSRLSSSSSSESGSSSSSGSSSDSSDSE) shows a compositional bias: low complexity.

The protein belongs to the BET family. As to quaternary structure, interacts (via bromo domain 1) with GATA1 acetylated at 'Lys-312' and 'Lys-315'. Interacts (via bromo domain 1) with GATA2 acetylated on lysine residues. Interacts (via NET domain) with CHD4 (via KIKL motif). Interacts (via NET domain) with SMARCA4 (via KIKL motif). Interacts (via NET domain) with NSD3 (via KIKL motif). In terms of assembly, (Microbial infection) Interacts with the Integrase protein of Moloney murine leukemia virus (MLV). In terms of tissue distribution, ubiquitous.

It localises to the nucleus. It is found in the chromosome. Inhibited by JQ1, a thieno-triazolo-1,4-diazepine derivative, which specifically inhibits members of the BET family (BRD2, BRD3 and BRD4). The first bromo domain is inhibited by GSK778 (iBET-BD1), which specifically inhibits the first bromo domain of members of the BET family (BRD2, BRD3 and BRD4). The second bromo domain is inhibited by ABBV-744, which specifically inhibits the second bromo domain of members of the BET family (BRD2, BRD3 and BRD4). The second bromo domain is inhibited by GSK046 (iBET-BD2), which specifically inhibits the second bromo domain of members of the BET family (BRD2, BRD3 and BRD4). Chromatin reader that recognizes and binds acetylated histones, thereby controlling gene expression and remodeling chromatin structures. Recruits transcription factors and coactivators to target gene sites, and activates RNA polymerase II machinery for transcriptional elongation. In vitro, binds acetylated lysine residues on the N-terminus of histone H2A, H2B, H3 and H4. Involved in endoderm differentiation via its association with long non-coding RNA (lncRNA) DIGIT: BRD3 undergoes liquid-liquid phase separation upon binding to lncRNA DIGIT, promoting binding to histone H3 acetylated at 'Lys-18' (H3K18ac) to induce endoderm gene expression. Also binds non-histones acetylated proteins, such as GATA1 and GATA2: regulates transcription by promoting the binding of the transcription factor GATA1 to its targets. The polypeptide is Bromodomain-containing protein 3 (Homo sapiens (Human)).